A 124-amino-acid chain; its full sequence is Large-conductance mechanosensitive channel (124 aa).

A run of 2 helical transmembrane segments spans residues 15-35 and 67-87; these read MDLA…NSLV and GSFL…FFLI.

The protein belongs to the MscL family. As to quaternary structure, homopentamer.

The protein localises to the cell membrane. Functionally, channel that opens in response to stretch forces in the membrane lipid bilayer. May participate in the regulation of osmotic pressure changes within the cell. This is Large-conductance mechanosensitive channel from Lactobacillus johnsonii (strain CNCM I-12250 / La1 / NCC 533).